Here is a 106-residue protein sequence, read N- to C-terminus: SDO1-like protein C21C3.19 (106 aa).

It belongs to the SDO1-like family.

It is found in the cytoplasm. It localises to the nucleus. In terms of biological role, may play a role in RNA metabolism. In Schizosaccharomyces pombe (strain 972 / ATCC 24843) (Fission yeast), this protein is SDO1-like protein C21C3.19.